Reading from the N-terminus, the 111-residue chain is Nucleoid-associated protein Fphi_0115 (111 aa).

A disordered region spans residues 1–27; that stretch reads MNFDMSKLMQQAQKMQEQMKKAQQERE. Residues 17 to 27 show a composition bias toward basic and acidic residues; that stretch reads EQMKKAQQERE.

Belongs to the YbaB/EbfC family. As to quaternary structure, homodimer.

It is found in the cytoplasm. It localises to the nucleoid. Its function is as follows. Binds to DNA and alters its conformation. May be involved in regulation of gene expression, nucleoid organization and DNA protection. The protein is Nucleoid-associated protein Fphi_0115 of Francisella philomiragia subsp. philomiragia (strain ATCC 25017 / CCUG 19701 / FSC 153 / O#319-036).